We begin with the raw amino-acid sequence, 213 residues long: Large ribosomal subunit protein uL3 (213 aa).

Glutamine 151 carries the post-translational modification N5-methylglutamine.

The protein belongs to the universal ribosomal protein uL3 family. As to quaternary structure, part of the 50S ribosomal subunit. Forms a cluster with proteins L14 and L19. In terms of processing, methylated by PrmB.

One of the primary rRNA binding proteins, it binds directly near the 3'-end of the 23S rRNA, where it nucleates assembly of the 50S subunit. The protein is Large ribosomal subunit protein uL3 of Rhizobium etli (strain ATCC 51251 / DSM 11541 / JCM 21823 / NBRC 15573 / CFN 42).